The following is a 368-amino-acid chain: UDP-galactose/UDP-N-acetylglucosamine transporter srf-3 (368 aa).

A run of 8 helical transmembrane segments spans residues 72-92 (FVSTVAVWLTEVIKCFICLFL), 118-138 (LKVCIPAMIYIVQNNLFYVAA), 145-165 (TFMITSQLKIFTAAIFTVIIL), 174-194 (WFALAVLFVGVSLVQLQGTKA), 203-223 (FVGFVAVVVACCLSGFAGIYF), 235-254 (LWMRNVQMAVFSIPASFSAI), 273-293 (SIVWLTVLWYGVGGLSVAVCI), and 317-337 (IFLFDFIPSFTFLLGASLVIF).

It belongs to the nucleotide-sugar transporter family. SLC35A subfamily. As to expression, expressed exclusively in pharyngeal cells g1 and g2, lateral seam cells, spermatheca and vas deferens.

The protein resides in the golgi apparatus membrane. In terms of biological role, acts as a transporter of both UDP-galactose and UDP-N-acetylglucosamine into the Golgi lumen. Apparently transports UDP-galactose and UDP-N-acetylglucosamine simultaneously, and independently, by an unknown mechanism. Functions redundantly with nucleotide sugar transporter nstp-4. May be involved in gonadal development. The chain is UDP-galactose/UDP-N-acetylglucosamine transporter srf-3 (srf-3) from Caenorhabditis elegans.